Here is a 379-residue protein sequence, read N- to C-terminus: Putative beta-glucosidase 6 (379 aa).

A signal peptide spans 1–20 (MEKTFALITIFLAFAFSGKC). Residues Gln43, His141, and 186 to 187 (NE) each bind a beta-D-glucoside. The active-site Proton donor is the Glu187. An intrachain disulfide couples Cys206 to Cys213. Residue Asn217 is glycosylated (N-linked (GlcNAc...) asparagine). Tyr329 is a binding site for a beta-D-glucoside. N-linked (GlcNAc...) asparagine glycosylation is present at Asn362.

This sequence belongs to the glycosyl hydrolase 1 family.

It catalyses the reaction Hydrolysis of terminal, non-reducing beta-D-glucosyl residues with release of beta-D-glucose.. This chain is Putative beta-glucosidase 6, found in Arabidopsis thaliana (Mouse-ear cress).